Here is a 408-residue protein sequence, read N- to C-terminus: Beta-ureidopropionase (408 aa).

Residues 90–360 form the CN hydrolase domain; that stretch reads VRVGLIQNSI…DGLLISDMDL (271 aa). The active-site Proton acceptor is E137. The active-site Proton donor is the K212. Catalysis depends on C249, which acts as the Nucleophile.

This sequence belongs to the carbon-nitrogen hydrolase superfamily. BUP family. Homodimer, homotetramer, homooctamer; can also form higher homooligomers.

Its subcellular location is the cytoplasm. It carries out the reaction 3-(carbamoylamino)propanoate + H2O + 2 H(+) = beta-alanine + NH4(+) + CO2. The enzyme catalyses 3-(carbamoylamino)-2-methylpropanoate + H2O + 2 H(+) = (R)-3-amino-2-methylpropanoate + NH4(+) + CO2. It participates in amino-acid biosynthesis; beta-alanine biosynthesis. Its function is as follows. Catalyzes a late step in pyrimidine degradation. Converts N-carbamoyl-beta-aminoisobutyrate and N-carbamoyl-beta-alanine (3-ureidopropanoate) to, respectively, beta-aminoisobutyrate and beta-alanine, ammonia and carbon dioxide. Involved in the recycling of nitrogen from nucleobases to general nitrogen metabolism. The sequence is that of Beta-ureidopropionase from Arabidopsis thaliana (Mouse-ear cress).